The sequence spans 446 residues: MADYLTVTHLTKYLKLKFDRDPYLERVYLTGQVSNFRKRPTHQYFSLKDESAVIQATMWAGVYKKLGFDLEEGMKINVIGRVQLYEPSGSYSIVIEKAEPDGIGALALQFEQLKKKLTAEGYFEQKHKQPLPQFVSKIGVITSPSGAVIRDIITTVSRRFPGVEILLFPTKVQGDGAAQEVVANIRRANQREDLDLLIVGRGGGSIEDLWAFNEEIVVQAIFESQLPVISSVGHETDTTLADFVADRRAATPTAAAELATPITKTDLMSWIVERQNRSYQACLRRIKQRQEWVDKLSQSVIFRQPERLYDAYLQKIDRLSMTLMNTMKDRLSSAKENKVQLDHALANSQLQTKIERYQDRVATAKRLLMANMASQYDSQLARFEKAQDALLSLDASRIIARGYAMIEKNQALVASVSQITKGDQLTIKMRDGQLDVEVKDVKNENI.

The protein belongs to the XseA family. As to quaternary structure, heterooligomer composed of large and small subunits.

It localises to the cytoplasm. The catalysed reaction is Exonucleolytic cleavage in either 5'- to 3'- or 3'- to 5'-direction to yield nucleoside 5'-phosphates.. In terms of biological role, bidirectionally degrades single-stranded DNA into large acid-insoluble oligonucleotides, which are then degraded further into small acid-soluble oligonucleotides. This Streptococcus pyogenes serotype M3 (strain ATCC BAA-595 / MGAS315) protein is Exodeoxyribonuclease 7 large subunit.